The sequence spans 35 residues: Photosystem II reaction center protein M (35 aa).

Residues 5–25 form a helical membrane-spanning segment; the sequence is IFGLTATALFIIIPTSFLLIL.

Belongs to the PsbM family. PSII is composed of 1 copy each of membrane proteins PsbA, PsbB, PsbC, PsbD, PsbE, PsbF, PsbH, PsbI, PsbJ, PsbK, PsbL, PsbM, PsbT, PsbX, PsbY, PsbZ, Psb30/Ycf12, at least 3 peripheral proteins of the oxygen-evolving complex and a large number of cofactors. It forms dimeric complexes.

It localises to the plastid. It is found in the chloroplast thylakoid membrane. In terms of biological role, one of the components of the core complex of photosystem II (PSII). PSII is a light-driven water:plastoquinone oxidoreductase that uses light energy to abstract electrons from H(2)O, generating O(2) and a proton gradient subsequently used for ATP formation. It consists of a core antenna complex that captures photons, and an electron transfer chain that converts photonic excitation into a charge separation. This subunit is found at the monomer-monomer interface. The chain is Photosystem II reaction center protein M from Tetradesmus obliquus (Green alga).